We begin with the raw amino-acid sequence, 501 residues long: Aspartate--tRNA ligase, cytoplasmic (501 aa).

Phosphothreonine is present on threonine 52. At lysine 74 the chain carries N6-acetyllysine. Glutamate 229 serves as a coordination point for L-aspartate. A Phosphoserine modification is found at serine 249. Residues 251–254 (QLYK) form an aspartate region. Arginine 273 contributes to the L-aspartate binding site. ATP-binding positions include 273-275 (RAE) and 281-283 (RHL). N6-acetyllysine is present on lysine 374. Residues 411 to 415 (KQSNS) form a binding site for the 3'-end of tRNA region. Residue glutamate 424 participates in ATP binding. Residues serine 427 and arginine 431 each contribute to the L-aspartate site. Position 472-475 (472-475 (GLER)) interacts with ATP. At threonine 500 the chain carries Phosphothreonine; by PKA.

This sequence belongs to the class-II aminoacyl-tRNA synthetase family. Type 2 subfamily. As to quaternary structure, homodimer. Part of a multisubunit complex that groups tRNA ligases for Arg (RARS1), Asp (DARS1), Gln (QARS1), Ile (IARS1), Leu (LARS1), Lys (KARS1), Met (MARS1) the bifunctional ligase for Glu and Pro (EPRS1) and the auxiliary subunits AIMP1/p43, AIMP2/p38 and EEF1E1/p18. As to expression, expression in the developing and adult brain shows similar patterns. Highly expressed in the ventricular and subventricular zones, including hippocampal subfields, the midlateral temporal cortex and the frontal polar cortex. The cerebellum, cerebral cortex, hippocampus, and lateral ventricle show preferential neuronal expression. Expression in the peripheral neurons is evident in the colon.

Its subcellular location is the cytoplasm. The protein localises to the cytosol. It catalyses the reaction tRNA(Asp) + L-aspartate + ATP = L-aspartyl-tRNA(Asp) + AMP + diphosphate. Its function is as follows. Catalyzes the specific attachment of an amino acid to its cognate tRNA in a 2 step reaction: the amino acid (AA) is first activated by ATP to form AA-AMP and then transferred to the acceptor end of the tRNA. This is Aspartate--tRNA ligase, cytoplasmic from Homo sapiens (Human).